The following is a 396-amino-acid chain: Phosphoglycerate kinase (396 aa).

Residues 21–23, arginine 36, 59–62, arginine 119, and arginine 156 contribute to the substrate site; these read DFN and HLGK. ATP contacts are provided by residues lysine 206, glycine 294, glutamate 325, and 352 to 355; that span reads GGDS.

This sequence belongs to the phosphoglycerate kinase family. In terms of assembly, monomer.

It is found in the cytoplasm. It carries out the reaction (2R)-3-phosphoglycerate + ATP = (2R)-3-phospho-glyceroyl phosphate + ADP. Its pathway is carbohydrate degradation; glycolysis; pyruvate from D-glyceraldehyde 3-phosphate: step 2/5. The sequence is that of Phosphoglycerate kinase from Listeria monocytogenes serotype 4a (strain HCC23).